Reading from the N-terminus, the 253-residue chain is Vitamin B12 import ATP-binding protein BtuD (253 aa).

An ABC transporter domain is found at 3–237 (LDAKNLAMPP…EQLESTFATQ (235 aa)). 31 to 38 (GPNGSGKS) contributes to the ATP binding site.

Belongs to the ABC transporter superfamily. Vitamin B12 importer (TC 3.A.1.13.1) family. In terms of assembly, the complex is composed of two ATP-binding proteins (BtuD), two transmembrane proteins (BtuC) and a solute-binding protein (BtuF).

The protein localises to the cell inner membrane. The catalysed reaction is an R-cob(III)alamin(out) + ATP + H2O = an R-cob(III)alamin(in) + ADP + phosphate + H(+). In terms of biological role, part of the ABC transporter complex BtuCDF involved in vitamin B12 import. Responsible for energy coupling to the transport system. This is Vitamin B12 import ATP-binding protein BtuD from Photobacterium profundum (strain SS9).